We begin with the raw amino-acid sequence, 48 residues long: 2-deoxy-glucose resistant protein 1, mitochondrial (48 aa).

The transit peptide at 1–28 (MQVGFVSQTNCRSFPACIVFLFQMSQRQ) directs the protein to the mitochondrion.

The protein resides in the mitochondrion. The sequence is that of 2-deoxy-glucose resistant protein 1, mitochondrial (DGR1) from Saccharomyces cerevisiae (strain ATCC 204508 / S288c) (Baker's yeast).